Here is a 216-residue protein sequence, read N- to C-terminus: Ribonuclease HII (216 aa).

The RNase H type-2 domain maps to 28–216 (ACIAGIDEAG…GVKEYVRSEE (189 aa)). 3 residues coordinate a divalent metal cation: Asp34, Glu35, and Asp126.

This sequence belongs to the RNase HII family. Mn(2+) serves as cofactor. Requires Mg(2+) as cofactor.

The protein resides in the cytoplasm. It carries out the reaction Endonucleolytic cleavage to 5'-phosphomonoester.. In terms of biological role, endonuclease that specifically degrades the RNA of RNA-DNA hybrids. This Geotalea uraniireducens (strain Rf4) (Geobacter uraniireducens) protein is Ribonuclease HII.